The following is a 149-amino-acid chain: Deoxyuridine 5'-triphosphate nucleotidohydrolase (149 aa).

Residues 68–70, Asn-81, 85–87, and Met-95 each bind substrate; these read RSG and LID.

This sequence belongs to the dUTPase family. Requires Mg(2+) as cofactor.

The catalysed reaction is dUTP + H2O = dUMP + diphosphate + H(+). The protein operates within pyrimidine metabolism; dUMP biosynthesis; dUMP from dCTP (dUTP route): step 2/2. Its function is as follows. This enzyme is involved in nucleotide metabolism: it produces dUMP, the immediate precursor of thymidine nucleotides and it decreases the intracellular concentration of dUTP so that uracil cannot be incorporated into DNA. In Bordetella avium (strain 197N), this protein is Deoxyuridine 5'-triphosphate nucleotidohydrolase.